The following is a 321-amino-acid chain: F-box protein At4g35930 (321 aa).

Positions 1–13 are enriched in basic and acidic residues; that stretch reads MGKVSPKDLDSKT. A disordered region spans residues 1-23; that stretch reads MGKVSPKDLDSKTSVRKKKLKSS. Residues 159 to 207 enclose the F-box domain; it reads ESQLESLPMDLLVKIVCHLHHDQLKAVFHVSQRIRMATILARQYHFNYT. The tract at residues 228–258 is disordered; that stretch reads WPFRRGDGNPTMVSSPHTPKAPKHAPRPPSR.

The sequence is that of F-box protein At4g35930 from Arabidopsis thaliana (Mouse-ear cress).